The sequence spans 503 residues: Lysine--tRNA ligase (503 aa).

Residues Glu414 and Glu421 each contribute to the Mg(2+) site.

It belongs to the class-II aminoacyl-tRNA synthetase family. In terms of assembly, homodimer. Mg(2+) serves as cofactor.

The protein resides in the cytoplasm. It catalyses the reaction tRNA(Lys) + L-lysine + ATP = L-lysyl-tRNA(Lys) + AMP + diphosphate. The sequence is that of Lysine--tRNA ligase from Neisseria gonorrhoeae (strain NCCP11945).